A 140-amino-acid chain; its full sequence is Oocyte-expressed protein homolog (140 aa).

In terms of domain architecture, KH; atypical spans 40 to 101 (PLVFFLEAWL…AVQRQVKSVL (62 aa)).

The protein belongs to the KHDC1 family. Component of the subcortical maternal complex (SCMC), at least composed of NLRP5, KHDC3, OOEP, and TLE6. Within the complex, interacts with NLRP5, KHDC3 and TLE6. As part of the SCMC interacts with the SCMC-associated protein NLRP4F. The SCMC may facilitate translocation of its components between the nuclear and cytoplasmic compartments. Forms a scaffold complex with KHDC3/FILIA, and interacts with BLM and TRIM25 at DNA replication forks.

The protein resides in the cytoplasm. It localises to the nucleus. Its function is as follows. Component of the subcortical maternal complex (SCMC), a multiprotein complex that plays a key role in early embryonic development. The SCMC complex is a structural constituent of cytoplasmic lattices, which consist in fibrous structures found in the cytoplasm of oocytes and preimplantation embryos. They are required to store maternal proteins critical for embryonic development, such as proteins that control epigenetic reprogramming of the preimplantation embryo, and prevent their degradation or activation. As part of the OOEP-KHDC3 scaffold, recruits BLM and TRIM25 to DNA replication forks, thereby promoting the ubiquitination of BLM by TRIM25, enhancing BLM retainment at replication forks and therefore promoting stalled replication fork restart. Positively regulates the homologous recombination-mediated DNA double-strand break (DSB) repair pathway by regulating ATM activation and RAD51 recruitment to DSBs in oocytes. Thereby contributes to oocyte survival and the resumption and completion of meiosis. The chain is Oocyte-expressed protein homolog (OOEP) from Bos taurus (Bovine).